Here is a 905-residue protein sequence, read N- to C-terminus: Phosphatidylethanolamine N-methyltransferase (905 aa).

2 stretches are compositionally biased toward polar residues: residues 1-22 and 40-58; these read MTNQ…STSV and DSNG…SSLN. The segment at 1 to 73 is disordered; the sequence is MTNQIPSASS…SEPERYGCTP (73 aa). Topologically, residues 1–104 are lumenal; sequence MTNQIPSASS…DPRFSKTPWD (104 aa). Residues 105 to 125 traverse the membrane as a helical segment; it reads WIVISSILAQVLLFFMTTGAV. Over 126–128 the chain is Cytoplasmic; sequence RRY. A helical transmembrane segment spans residues 129-149; that stretch reads SMMLCFFFWRISYDAGIGFLL. Topologically, residues 150–209 are lumenal; it reads HMQSNHRKVVTWISDFGFFDKENHPKLYDLTKKQLISKMDSSYNYDTSPLEFNSWLVFRH. The chain crosses the membrane as a helical span at residues 210–230; sequence FVDLILMCDFCSYILMGLAWT. Residues 231–236 are Cytoplasmic-facing; it reads CWPKVN. A helical transmembrane segment spans residues 237–257; it reads IILQFLRIFGGIALIVFNYWV. The Lumenal segment spans residues 258–268; that stretch reads KMDAHRVVRDY. A helical transmembrane segment spans residues 269–289; the sequence is AWYWGDFFFLLRSSLVFNGVF. Over 290 to 313 the chain is Cytoplasmic; that stretch reads ELAPHPMYSVGYAGYYGMSLLTGS. A helical membrane pass occupies residues 314–334; sequence YAVLFASILAHAAQFGFLLFV. Residues 335–379 lie on the Lumenal side of the membrane; sequence ENPHIERTYGTDINHARLSPRGEDNEFELPPEHDLVGFVNFDFTR. Position 353 is a phosphoserine (serine 353). A helical transmembrane segment spans residues 380-400; the sequence is ISDVALLIIALYSIFIILLSS. Residues 401-408 lie on the Cytoplasmic side of the membrane; the sequence is NSHYSQFW. Residues 409–429 traverse the membrane as a helical segment; that stretch reads AIFQAFVWRFLHSIIHAFILF. At 430–456 the chain is on the lumenal side; sequence YQSKSKAWTKHFIRNGESAAYAWSQWK. A helical transmembrane segment spans residues 457–479; it reads GLYNLTLNMSYISFVMAAWKLYH. The Cytoplasmic segment spans residues 480–493; sequence LPSNWTYGLVSLRH. Residues 494 to 514 form a helical membrane-spanning segment; that stretch reads ALGFGLIALHIYTSVSIYEDL. The Lumenal portion of the chain corresponds to 515–552; that stretch reads GQYGWFYGDFFLPSRSPKLVYQGIYRYVNNPERFLGCS. Residues 553–573 form a helical membrane-spanning segment; that stretch reads AYWGLALISSSAWIFLIAILA. At 574–905 the chain is on the cytoplasmic side; it reads QLSNLAIIRL…FDGPSGAKDD (332 aa).

Belongs to the class VI-like SAM-binding methyltransferase superfamily. CHO2 family.

It is found in the endoplasmic reticulum membrane. The enzyme catalyses a 1,2-diacyl-sn-glycero-3-phosphoethanolamine + S-adenosyl-L-methionine = a 1,2-diacyl-sn-glycero-3-phospho-N-methylethanolamine + S-adenosyl-L-homocysteine + H(+). It participates in phospholipid metabolism; phosphatidylcholine biosynthesis. Its function is as follows. Catalyzes the first step of the methylation pathway of phosphatidylcholine biosynthesis, the SAM-dependent methylation of phosphatidylethanolamine (PE) to phosphatidylmonomethylethanolamine (PMME). The chain is Phosphatidylethanolamine N-methyltransferase from Schizosaccharomyces pombe (strain 972 / ATCC 24843) (Fission yeast).